The chain runs to 246 residues: MLWRQLIYWQLLALFFLPFCLCQDEYMESPQTGGLPPDCSKCCHGDYSFRGYQGPPGPPGPPGIPGNHGNNGNNGATGHEGAKGEKGDKGDLGPRGERGQHGPKGEKGYPGIPPELQIAFMASLATHFSNQNSGIIFSSVETNIGNFFDVMTGRFGAPVSGVYFFTFSMMKHEDVEEVYVYLMHNGNTVFSMYSYEMKGKSDTSSNHAVLKLAKGDEVWLRMGNGALHGDHQRFSTFAGFLLFETK.

The N-terminal stretch at 1 to 22 (MLWRQLIYWQLLALFFLPFCLC) is a signal peptide. The Collagen-like domain maps to 51–113 (GYQGPPGPPG…KGEKGYPGIP (63 aa)). Residues 53–110 (QGPPGPPGPPGIPGNHGNNGNNGATGHEGAKGEKGDKGDLGPRGERGQHGPKGEKGYP) are disordered. Over residues 55 to 64 (PPGPPGPPGI) the composition is skewed to pro residues. Positions 65 to 74 (PGNHGNNGNN) are enriched in low complexity. N-linked (GlcNAc...) asparagine glycosylation occurs at N70. A compositionally biased stretch (basic and acidic residues) spans 80–107 (EGAKGEKGDKGDLGPRGERGQHGPKGEK). Residues 113-246 (PPELQIAFMA…FAGFLLFETK (134 aa)) enclose the C1q domain.

Glycosylated on Asn-70. As to expression, expressed in colon and small intestine.

The protein localises to the secreted. The polypeptide is Complement C1q tumor necrosis factor-related protein 3 (C1QTNF3) (Homo sapiens (Human)).